The primary structure comprises 239 residues: Endolytic peptidoglycan transglycosylase RlpA (239 aa).

The first 25 residues, 1-25 (MTLTRKTLFLLTAAFGTHSLQTASA), serve as a signal peptide directing secretion. The SPOR domain occupies 160–239 (VAENKDIFID…GMVRAVLTAG (80 aa)).

The protein belongs to the RlpA family.

Its function is as follows. Lytic transglycosylase with a strong preference for naked glycan strands that lack stem peptides. This Neisseria meningitidis serogroup B (strain ATCC BAA-335 / MC58) protein is Endolytic peptidoglycan transglycosylase RlpA.